A 295-amino-acid polypeptide reads, in one-letter code: uncharacterized protein (295 aa).

This is an uncharacterized protein from Xanthobacter autotrophicus.